The primary structure comprises 365 residues: Dual-specificity RNA methyltransferase RlmN (365 aa).

Residue Glu-91 is the Proton acceptor of the active site. The region spanning 97-337 (ETSRGTLCIS…TTVRKTRGDD (241 aa)) is the Radical SAM core domain. A disulfide bond links Cys-104 and Cys-342. [4Fe-4S] cluster-binding residues include Cys-111, Cys-115, and Cys-118. Residues 168–169 (GE), Ser-200, 222–224 (SLH), and Asn-299 contribute to the S-adenosyl-L-methionine site. Cys-342 acts as the S-methylcysteine intermediate in catalysis.

This sequence belongs to the radical SAM superfamily. RlmN family. It depends on [4Fe-4S] cluster as a cofactor.

Its subcellular location is the cytoplasm. It carries out the reaction adenosine(2503) in 23S rRNA + 2 reduced [2Fe-2S]-[ferredoxin] + 2 S-adenosyl-L-methionine = 2-methyladenosine(2503) in 23S rRNA + 5'-deoxyadenosine + L-methionine + 2 oxidized [2Fe-2S]-[ferredoxin] + S-adenosyl-L-homocysteine. It catalyses the reaction adenosine(37) in tRNA + 2 reduced [2Fe-2S]-[ferredoxin] + 2 S-adenosyl-L-methionine = 2-methyladenosine(37) in tRNA + 5'-deoxyadenosine + L-methionine + 2 oxidized [2Fe-2S]-[ferredoxin] + S-adenosyl-L-homocysteine. Its function is as follows. Specifically methylates position 2 of adenine 2503 in 23S rRNA and position 2 of adenine 37 in tRNAs. m2A2503 modification seems to play a crucial role in the proofreading step occurring at the peptidyl transferase center and thus would serve to optimize ribosomal fidelity. This chain is Dual-specificity RNA methyltransferase RlmN, found in Nitrosospira multiformis (strain ATCC 25196 / NCIMB 11849 / C 71).